The sequence spans 178 residues: Translation initiation factor IF-3 (178 aa).

This sequence belongs to the IF-3 family. In terms of assembly, monomer.

Its subcellular location is the cytoplasm. Functionally, IF-3 binds to the 30S ribosomal subunit and shifts the equilibrium between 70S ribosomes and their 50S and 30S subunits in favor of the free subunits, thus enhancing the availability of 30S subunits on which protein synthesis initiation begins. In Ralstonia nicotianae (strain ATCC BAA-1114 / GMI1000) (Ralstonia solanacearum), this protein is Translation initiation factor IF-3.